A 117-amino-acid chain; its full sequence is Large ribosomal subunit protein bL20c (117 aa).

The protein belongs to the bacterial ribosomal protein bL20 family.

The protein resides in the plastid. It localises to the chloroplast. Functionally, binds directly to 23S ribosomal RNA and is necessary for the in vitro assembly process of the 50S ribosomal subunit. It is not involved in the protein synthesizing functions of that subunit. The polypeptide is Large ribosomal subunit protein bL20c (Thalassiosira pseudonana (Marine diatom)).